A 666-amino-acid chain; its full sequence is LEAF RUST 10 DISEASE-RESISTANCE LOCUS RECEPTOR-LIKE PROTEIN KINASE-like 2.5 (666 aa).

The signal sequence occupies residues 1–30 (MINFSLSLTKSMSYSFIWMLFVIHISCVLS). The Extracellular portion of the chain corresponds to 31–275 (ADGNHILCSP…PTRNKVILKL (245 aa)). Residues N119, N141, N171, and N198 are each glycosylated (N-linked (GlcNAc...) asparagine). Residues 276–296 (FFIVIYVLGIGAASFAMMGVI) form a helical membrane-spanning segment. Over 297–666 (LVVTCLNCLI…YTEICSINVA (370 aa)) the chain is Cytoplasmic. Positions 348 to 636 (KSFAEVIGKG…ALEVPPRPVL (289 aa)) constitute a Protein kinase domain. Residues 354–362 (IGKGGFGTV) and K376 contribute to the ATP site. Y420 carries the phosphotyrosine modification. Catalysis depends on D471, which acts as the Proton acceptor. A phosphothreonine mark is found at T508 and T511.

Belongs to the protein kinase superfamily. Ser/Thr protein kinase family.

The protein localises to the membrane. It carries out the reaction L-seryl-[protein] + ATP = O-phospho-L-seryl-[protein] + ADP + H(+). It catalyses the reaction L-threonyl-[protein] + ATP = O-phospho-L-threonyl-[protein] + ADP + H(+). The sequence is that of LEAF RUST 10 DISEASE-RESISTANCE LOCUS RECEPTOR-LIKE PROTEIN KINASE-like 2.5 from Arabidopsis thaliana (Mouse-ear cress).